Here is a 452-residue protein sequence, read N- to C-terminus: MILSKDIKLLPGSKVEVLIRVSKNIIQEKYKSLLQDYSSRLKIQGFRIGKVPINIIENKYSEGLKATVLEEVINGSFKEFFKEEPKRPLSYAAPTIKEKDLRLDLDKDFEFTFTYETYPEFEIPSVDSIDIKVEVPEVFIDDSDIDNEIRRLQIENSIIIEDEEGVVKKNSIVKVDFVELDDLLNEILSTKRQDFVFTVGKSETYYDFDRDVIGMRINEEKVLEKSYITDYKFEELAGSSRKLKIKIKSIKKRDLPLIDDEFAQDISDRYDTLDDLKNFIRSDILNVIEEKKEALKLNKFFSTISEKLEIDIPHSMIEAEIEIAFKDTAKQNKMGLEEFKSIFYSSGYVGSVNLKDKILSNLKSKLIIQKMVDLDPIEVTESDLEDEIARQSENSGMSCEEIKKFYEDQNLISYLKDDIKRKRVKKKILANLKELKGKQVSFKDFVNYKICE.

One can recognise a PPIase FKBP-type domain in the interval 170–256 (NSIVKVDFVE…IKSIKKRDLP (87 aa)).

This sequence belongs to the FKBP-type PPIase family. Tig subfamily.

It is found in the cytoplasm. It carries out the reaction [protein]-peptidylproline (omega=180) = [protein]-peptidylproline (omega=0). In terms of biological role, involved in protein export. Acts as a chaperone by maintaining the newly synthesized protein in an open conformation. Functions as a peptidyl-prolyl cis-trans isomerase. The sequence is that of Trigger factor from Borrelia garinii subsp. bavariensis (strain ATCC BAA-2496 / DSM 23469 / PBi) (Borreliella bavariensis).